A 147-amino-acid chain; its full sequence is Peptide methionine sulfoxide reductase MsrB (147 aa).

The MsrB domain maps to 8–131 (KEELKKVLTE…NSASLKFIPK (124 aa)). Catalysis depends on Cys120, which acts as the Nucleophile.

Belongs to the MsrB Met sulfoxide reductase family.

It catalyses the reaction L-methionyl-[protein] + [thioredoxin]-disulfide + H2O = L-methionyl-(R)-S-oxide-[protein] + [thioredoxin]-dithiol. The chain is Peptide methionine sulfoxide reductase MsrB from Clostridium perfringens (strain ATCC 13124 / DSM 756 / JCM 1290 / NCIMB 6125 / NCTC 8237 / Type A).